Here is a 65-residue protein sequence, read N- to C-terminus: Bacteriocin amylovorin-L (65 aa).

A propeptide spanning residues 1–15 (MKQLNSEQLQNIIGG) is cleaved from the precursor. The chain crosses the membrane as a helical span at residues 39–59 (LGGVWGAVIGGVGGAAVCGLA).

In terms of assembly, active lactobin is composed of two different peptides, one which is lactobin A.

It is found in the secreted. Its subcellular location is the host cell membrane. This heat stable bacteriocin inhibits the growth of closely related Lactobacillus species. It may act as a pore-forming protein, creating a channel in the cell membrane. It kills Lactobacillus helveticus ATCC 15009, but displays no activity towards Listeria species. The polypeptide is Bacteriocin amylovorin-L (amyL) (Lactobacillus amylovorus).